The primary structure comprises 136 residues: Nucleoside diphosphate kinase (136 aa).

Positions 10, 58, 86, 92, 104, and 114 each coordinate ATP. The Pros-phosphohistidine intermediate role is filled by H117.

It belongs to the NDK family. As to quaternary structure, homotetramer. Requires Mg(2+) as cofactor.

The protein localises to the cytoplasm. It catalyses the reaction a 2'-deoxyribonucleoside 5'-diphosphate + ATP = a 2'-deoxyribonucleoside 5'-triphosphate + ADP. The catalysed reaction is a ribonucleoside 5'-diphosphate + ATP = a ribonucleoside 5'-triphosphate + ADP. In terms of biological role, major role in the synthesis of nucleoside triphosphates other than ATP. The ATP gamma phosphate is transferred to the NDP beta phosphate via a ping-pong mechanism, using a phosphorylated active-site intermediate. This chain is Nucleoside diphosphate kinase, found in Mycolicibacterium vanbaalenii (strain DSM 7251 / JCM 13017 / BCRC 16820 / KCTC 9966 / NRRL B-24157 / PYR-1) (Mycobacterium vanbaalenii).